Reading from the N-terminus, the 110-residue chain is Early E3B 12.7 kDa protein (110 aa).

The signal sequence occupies residues 1-16 (MKTALVLFFMLIPVWA). The chain crosses the membrane as a helical span at residues 37–57 (YIGWVYGIMSGLVFVSSVVSL).

It belongs to the adenoviridae E3_14 family. In terms of processing, phosphorylated on serine; O-glycosylated, but not N-glycosylated.

The protein resides in the host membrane. In terms of biological role, down-regulates the EGF receptor and prevents cytolysis by TNF. The protein is Early E3B 12.7 kDa protein of Homo sapiens (Human).